The chain runs to 559 residues: Suppressor of tumorigenicity 7 protein-like (559 aa).

A run of 3 helical transmembrane segments spans residues 39–59, 83–103, and 513–533; these read GLANSGSTLWFLAGLGLLYAL, FYVALTGTSSLISGLIFIFEW, and LPFFIHFTAGLCSSTAMIALL.

This sequence belongs to the ST7 family.

The protein resides in the membrane. This Rattus norvegicus (Rat) protein is Suppressor of tumorigenicity 7 protein-like (St7l).